We begin with the raw amino-acid sequence, 606 residues long: Chaperone protein DnaK (606 aa).

A Phosphothreonine; by autocatalysis modification is found at Thr174. A disordered region spans residues 578 to 606; that stretch reads YTQAGPQGGTNPGGQGGTDGNVNTDYKVY. Residues 583–596 show a composition bias toward gly residues; the sequence is PQGGTNPGGQGGTD.

The protein belongs to the heat shock protein 70 family.

Functionally, acts as a chaperone. In Caldicellulosiruptor saccharolyticus (strain ATCC 43494 / DSM 8903 / Tp8T 6331), this protein is Chaperone protein DnaK.